The primary structure comprises 488 residues: Monodehydroascorbate reductase 4, peroxisomal (488 aa).

The Cytoplasmic segment spans residues 1–3 (MGR). Residues 4 to 24 (AFVYVILGGGVAAGYAALEFT) form a helical membrane-spanning segment. Residues 12-15 (GGVA), glutamate 39, arginine 46, lysine 51, and 145-146 (RD) each bind FAD. Topologically, residues 25-458 (RRGVSDGELC…SASVVMIKKP (434 aa)) are peroxisomal. NAD(+)-binding positions include 170–176 (GGYIGME), glutamate 194, arginine 200, and glycine 259. 172-176 (YIGME) contacts NADP(+). 2 residues coordinate NADP(+): arginine 200 and glycine 259. Aspartate 296 serves as a coordination point for FAD. 312–313 (EH) is an NAD(+) binding site. 312-313 (EH) contacts NADP(+). An FAD-binding site is contributed by valine 314. Residue arginine 318 participates in L-ascorbate binding. Tyrosine 344 lines the FAD pocket. Tyrosine 344 serves as a coordination point for NAD(+). Position 344 (tyrosine 344) interacts with NADP(+). Arginine 346 is an L-ascorbate binding site. A helical membrane pass occupies residues 459 to 479 (LYVWHAATGVVVAASVAAFAF). At 480-488 (WYGRRRRRW) the chain is on the cytoplasmic side.

The protein belongs to the FAD-dependent oxidoreductase family. Requires FAD as cofactor.

The protein localises to the peroxisome membrane. The catalysed reaction is 2 monodehydro-L-ascorbate radical + NADH + H(+) = 2 L-ascorbate + NAD(+). Its function is as follows. Catalyzes the conversion of monodehydroascorbate to ascorbate, oxidizing NADH in the process. Involved in the detoxification of H(2)O(2) that escapes the peroxisome and causes oxidative damage to oil bodies. This is Monodehydroascorbate reductase 4, peroxisomal from Arabidopsis thaliana (Mouse-ear cress).